Reading from the N-terminus, the 840-residue chain is Protein translocase subunit SecA (840 aa).

Residues Gln-87, 105-109 (GEGKT), and Asp-494 each bind ATP. The interval 791 to 840 (LRKEQEDQPMFFGPAEGAGQKPQTRKDRKVGRNDPCPCGSGKKYKKCCGK) is disordered. Cys-826, Cys-828, Cys-837, and Cys-838 together coordinate Zn(2+).

The protein belongs to the SecA family. As to quaternary structure, monomer and homodimer. Part of the essential Sec protein translocation apparatus which comprises SecA, SecYEG and auxiliary proteins SecDF-YajC and YidC. Requires Zn(2+) as cofactor.

Its subcellular location is the cell inner membrane. It is found in the cytoplasm. It catalyses the reaction ATP + H2O + cellular proteinSide 1 = ADP + phosphate + cellular proteinSide 2.. Its function is as follows. Part of the Sec protein translocase complex. Interacts with the SecYEG preprotein conducting channel. Has a central role in coupling the hydrolysis of ATP to the transfer of proteins into and across the cell membrane, serving as an ATP-driven molecular motor driving the stepwise translocation of polypeptide chains across the membrane. The chain is Protein translocase subunit SecA from Syntrophobacter fumaroxidans (strain DSM 10017 / MPOB).